We begin with the raw amino-acid sequence, 140 residues long: Nucleoside diphosphate kinase (140 aa).

ATP is bound by residues Lys11, Phe59, Arg87, Thr93, Arg104, and Asn114. The Pros-phosphohistidine intermediate role is filled by His117.

It belongs to the NDK family. In terms of assembly, homotetramer. Mg(2+) serves as cofactor.

It localises to the cytoplasm. It carries out the reaction a 2'-deoxyribonucleoside 5'-diphosphate + ATP = a 2'-deoxyribonucleoside 5'-triphosphate + ADP. It catalyses the reaction a ribonucleoside 5'-diphosphate + ATP = a ribonucleoside 5'-triphosphate + ADP. Major role in the synthesis of nucleoside triphosphates other than ATP. The ATP gamma phosphate is transferred to the NDP beta phosphate via a ping-pong mechanism, using a phosphorylated active-site intermediate. The protein is Nucleoside diphosphate kinase of Erythrobacter litoralis (strain HTCC2594).